Consider the following 379-residue polypeptide: Putative acetyl-CoA C-acetyltransferase VraB (379 aa).

Cys-86 (acyl-thioester intermediate) is an active-site residue. Residue His-338 is the Proton acceptor of the active site.

It belongs to the thiolase-like superfamily. Thiolase family.

This chain is Putative acetyl-CoA C-acetyltransferase VraB (vraB), found in Staphylococcus aureus (strain COL).